The primary structure comprises 177 residues: Peptide methionine sulfoxide reductase MsrA (177 aa).

The active site involves cysteine 10.

Belongs to the MsrA Met sulfoxide reductase family.

It catalyses the reaction L-methionyl-[protein] + [thioredoxin]-disulfide + H2O = L-methionyl-(S)-S-oxide-[protein] + [thioredoxin]-dithiol. It carries out the reaction [thioredoxin]-disulfide + L-methionine + H2O = L-methionine (S)-S-oxide + [thioredoxin]-dithiol. Its function is as follows. Has an important function as a repair enzyme for proteins that have been inactivated by oxidation. Catalyzes the reversible oxidation-reduction of methionine sulfoxide in proteins to methionine. In Saccharolobus solfataricus (strain ATCC 35092 / DSM 1617 / JCM 11322 / P2) (Sulfolobus solfataricus), this protein is Peptide methionine sulfoxide reductase MsrA.